A 206-amino-acid polypeptide reads, in one-letter code: Ras-related protein Ral-B (206 aa).

Residue 21-29 coordinates GTP; it reads GSGGVGKSA. The short motif at 43-51 is the Effector region element; that stretch reads YEPTKADSY. GTP-binding positions include 68–72, 128–131, and 158–160; these read DTAGQ, NKSD, and SAK. A compositionally biased stretch (basic and acidic residues) spans 180–189; sequence KMSENKDKNG. The interval 180-206 is disordered; it reads KMSENKDKNGKKSSKNKKSFKERCCLL. Residue cysteine 203 is modified to Cysteine methyl ester. Residue cysteine 203 is the site of S-geranylgeranyl cysteine attachment. Positions 204–206 are cleaved as a propeptide — removed in mature form; the sequence is CLL.

It belongs to the small GTPase superfamily. Ras family. As to quaternary structure, interacts with EXOC2/Sec5 and EXOC8/Exo84. Interacts (via effector domain) with RALBP1. Prenylation is essential for membrane localization. In terms of processing, the farnesylated form confers resistance to the proapoptotic and anti-anchorage-dependent growth effects of some geranylgeranyltransferase I inhibitors.

It localises to the cell membrane. The protein localises to the midbody. It catalyses the reaction GTP + H2O = GDP + phosphate + H(+). Alternates between an inactive form bound to GDP and an active form bound to GTP. Activated by a guanine nucleotide-exchange factor (GEF) and inactivated by a GTPase-activating protein (GAP). Functionally, multifunctional GTPase involved in a variety of cellular processes including gene expression, cell migration, cell proliferation, oncogenic transformation and membrane trafficking. Accomplishes its multiple functions by interacting with distinct downstream effectors. Acts as a GTP sensor for GTP-dependent exocytosis of dense core vesicles. Required both to stabilize the assembly of the exocyst complex and to localize functional exocyst complexes to the leading edge of migrating cells. Required for suppression of apoptosis. In late stages of cytokinesis, upon completion of the bridge formation between dividing cells, mediates exocyst recruitment to the midbody to drive abscission. Involved in ligand-dependent receptor mediated endocytosis of the EGF and insulin receptors. This is Ras-related protein Ral-B (RALB) from Pongo abelii (Sumatran orangutan).